Here is a 407-residue protein sequence, read N- to C-terminus: O-methyltransferase verK (407 aa).

S-adenosyl-L-methionine-binding positions include glutamate 263 and 295–297; that span reads GDF. Histidine 314 (proton acceptor) is an active-site residue.

Belongs to the class I-like SAM-binding methyltransferase superfamily. Cation-independent O-methyltransferase family.

The protein operates within mycotoxin biosynthesis. In terms of biological role, O-methyltransferase; part of the gene cluster that mediates the biosynthesis of 11'-deoxyverticillin A, one of the dimeric epipolythiodioxopiperazines (ETPs) from the verticillin family that act as mycotoxins. 11'-deoxyverticillin A is required for normal conidiation. The nonribosomal peptide synthetase verP is speculated to be responsible for condensation of amino acids to form the carbon skeleton of verticillin, whereas the cluster-specific tailoring enzymes are involved in further modifications leading to the production of 11'-deoxyverticillin A. This chain is O-methyltransferase verK, found in Clonostachys rogersoniana.